Here is an 874-residue protein sequence, read N- to C-terminus: Leucine--tRNA ligase (874 aa).

The 'HIGH' region motif lies at Pro47–His57. A 'KMSKS' region motif is present at residues Lys636–Ser640. Lys639 is an ATP binding site.

It belongs to the class-I aminoacyl-tRNA synthetase family.

The protein resides in the cytoplasm. It catalyses the reaction tRNA(Leu) + L-leucine + ATP = L-leucyl-tRNA(Leu) + AMP + diphosphate. The polypeptide is Leucine--tRNA ligase (Acinetobacter baumannii (strain SDF)).